The sequence spans 480 residues: Coronin-2B (480 aa).

WD repeat units follow at residues 29–77 (HCFD…GRIE), 78–127 (PNYP…RNMT), 128–170 (EALL…LDVG), 171–212 (EPVK…PRSG), 213–259 (RVLQ…EDLS), 260–305 (MPLI…TEKP), and 306–345 (YLSY…KLVT). Residues 436 to 479 (NELLRMFFRQQDEIRRLKEELAQKDIRIRQLQLELKNLRNSPKN) are a coiled coil.

The protein belongs to the WD repeat coronin family. In terms of assembly, binds to F-actin and to vinculin. As to expression, expressed predominantly in brain.

It localises to the cytoplasm. The protein resides in the cytoskeleton. In terms of biological role, may play a role in the reorganization of neuronal actin structure. This is Coronin-2B (CORO2B) from Homo sapiens (Human).